The following is a 495-amino-acid chain: IQ domain-containing protein IQM5 (495 aa).

Residues 89-122 are disordered; that stretch reads ENRGGEEEDERGSSPKRRNRGNLTALSLPAPTPF. An IQ domain is found at 131–160; it reads LDAAAVTLQKVYKSYRTRRNLADCAVVVEE.

In terms of tissue distribution, expressed in roots, rosette and cauline leaves, and at lower levels in stems, flowers and siliques.

It is found in the cytoplasm. The protein resides in the nucleus. Functionally, may be involved in biotic and abiotic stress responses. This chain is IQ domain-containing protein IQM5, found in Arabidopsis thaliana (Mouse-ear cress).